A 445-amino-acid polypeptide reads, in one-letter code: Ribosome biogenesis protein YTM1 (445 aa).

The ubiquitin-like (UBL) domain stretch occupies residues 8–89; the sequence is VKVKFFTREQ…EAVLNVEYTR (82 aa). A sufficient for interaction with ERB1 and association with 66S pre-ribosomes region spans residues 99-445; the sequence is SFSNEDWVSA…FNKGDNIFKN (347 aa). 7 WD repeats span residues 101 to 138, 140 to 178, 195 to 232, 270 to 310, 312 to 351, 358 to 398, and 409 to 445; these read SNEDWVSALDVGAERIVSGSYDGVVRTWNLSGKIEKQY, GHTGAVRAVKFISSTRLVSGGNDRTLRLWKTKNDDVKHV, GHQAPVVSVDVQGDRILSASYDNSIGFWSTNHKDMTAV, SHKA…CVDT, STSYSLLSMVELPKLRLLACGSSARHITLHDPRADSSAKI, GHKN…SIYT, and GINDKVFAVKWAKGVGIISGGQDKKIQFNKGDNIFKN.

It belongs to the WD repeat WDR12/YTM1 family. As to quaternary structure, component of the NOP7 complex, composed of ERB1, NOP7 and YTM1. The complex is held together by ERB1, which interacts with NOP7 via its N-terminal domain and with YTM1 via a high-affinity interaction between the seven-bladed beta-propeller domains of the 2 proteins. The NOP7 complex associates with the 66S pre-ribosome. Interacts (via UBL domain) with MDN1 (via VWFA/MIDAS domain).

The protein localises to the nucleus. It localises to the nucleolus. It is found in the nucleoplasm. In terms of biological role, component of the NOP7 complex, which is required for maturation of the 25S and 5.8S ribosomal RNAs and formation of the 60S ribosome. The chain is Ribosome biogenesis protein YTM1 from Eremothecium gossypii (strain ATCC 10895 / CBS 109.51 / FGSC 9923 / NRRL Y-1056) (Yeast).